A 189-amino-acid chain; its full sequence is Elongation factor P (189 aa).

This sequence belongs to the elongation factor P family.

The protein resides in the cytoplasm. The protein operates within protein biosynthesis; polypeptide chain elongation. Its function is as follows. Involved in peptide bond synthesis. Stimulates efficient translation and peptide-bond synthesis on native or reconstituted 70S ribosomes in vitro. Probably functions indirectly by altering the affinity of the ribosome for aminoacyl-tRNA, thus increasing their reactivity as acceptors for peptidyl transferase. The sequence is that of Elongation factor P from Pseudomonas syringae pv. syringae (strain B728a).